The sequence spans 338 residues: DNA-directed RNA polymerase subunit alpha (338 aa).

An alpha N-terminal domain (alpha-NTD) region spans residues 1-234 (MIQKNWQELI…DQLQLFINFE (234 aa)). Residues 250–338 (FNKNLLRKVD…ELAKKLEEPY (89 aa)) form an alpha C-terminal domain (alpha-CTD) region.

This sequence belongs to the RNA polymerase alpha chain family. As to quaternary structure, homodimer. The RNAP catalytic core consists of 2 alpha, 1 beta, 1 beta' and 1 omega subunit. When a sigma factor is associated with the core the holoenzyme is formed, which can initiate transcription.

It carries out the reaction RNA(n) + a ribonucleoside 5'-triphosphate = RNA(n+1) + diphosphate. In terms of biological role, DNA-dependent RNA polymerase catalyzes the transcription of DNA into RNA using the four ribonucleoside triphosphates as substrates. In Paramagnetospirillum magneticum (strain ATCC 700264 / AMB-1) (Magnetospirillum magneticum), this protein is DNA-directed RNA polymerase subunit alpha.